The primary structure comprises 329 residues: N-acetyl-gamma-glutamyl-phosphate reductase (329 aa).

Cys-155 is a catalytic residue.

The protein belongs to the NAGSA dehydrogenase family. Type 1 subfamily.

It localises to the cytoplasm. It carries out the reaction N-acetyl-L-glutamate 5-semialdehyde + phosphate + NADP(+) = N-acetyl-L-glutamyl 5-phosphate + NADPH + H(+). It participates in amino-acid biosynthesis; L-arginine biosynthesis; N(2)-acetyl-L-ornithine from L-glutamate: step 3/4. Its function is as follows. Catalyzes the NADPH-dependent reduction of N-acetyl-5-glutamyl phosphate to yield N-acetyl-L-glutamate 5-semialdehyde. The chain is N-acetyl-gamma-glutamyl-phosphate reductase from Shewanella piezotolerans (strain WP3 / JCM 13877).